Reading from the N-terminus, the 125-residue chain is PEP-dependent dihydroxyacetone kinase 2, phosphoryl donor subunit DhaM (125 aa).

The PTS EIIA type-4 domain maps to 1–125; sequence MISIVLVSHS…AILQELTNVH (125 aa). Histidine 9 serves as the catalytic Tele-phosphohistidine intermediate.

This sequence belongs to the PEP-utilizing enzyme family. As to quaternary structure, homodimer. The dihydroxyacetone kinase complex is composed of a homodimer of DhaM, a homodimer of DhaK and the subunit DhaL.

The protein localises to the cytoplasm. It carries out the reaction dihydroxyacetone + phosphoenolpyruvate = dihydroxyacetone phosphate + pyruvate. Functionally, component of the dihydroxyacetone kinase complex, which is responsible for the phosphoenolpyruvate (PEP)-dependent phosphorylation of dihydroxyacetone. DhaM serves as the phosphoryl donor. Is phosphorylated by phosphoenolpyruvate in an EI- and HPr-dependent reaction, and a phosphorelay system on histidine residues finally leads to phosphoryl transfer to DhaL and dihydroxyacetone. This is PEP-dependent dihydroxyacetone kinase 2, phosphoryl donor subunit DhaM from Listeria innocua serovar 6a (strain ATCC BAA-680 / CLIP 11262).